The primary structure comprises 328 residues: Tetraacyldisaccharide 4'-kinase (328 aa).

55–62 (TAGGNGKT) provides a ligand contact to ATP.

This sequence belongs to the LpxK family.

It catalyses the reaction a lipid A disaccharide + ATP = a lipid IVA + ADP + H(+). It functions in the pathway glycolipid biosynthesis; lipid IV(A) biosynthesis; lipid IV(A) from (3R)-3-hydroxytetradecanoyl-[acyl-carrier-protein] and UDP-N-acetyl-alpha-D-glucosamine: step 6/6. Functionally, transfers the gamma-phosphate of ATP to the 4'-position of a tetraacyldisaccharide 1-phosphate intermediate (termed DS-1-P) to form tetraacyldisaccharide 1,4'-bis-phosphate (lipid IVA). In Escherichia coli O81 (strain ED1a), this protein is Tetraacyldisaccharide 4'-kinase.